Consider the following 248-residue polypeptide: Probable transcriptional regulatory protein Rsph17025_0577 (248 aa).

The disordered stretch occupies residues 1 to 21 (MAGHSKWANIQHRKGKQDKLR).

It belongs to the TACO1 family.

It is found in the cytoplasm. This chain is Probable transcriptional regulatory protein Rsph17025_0577, found in Cereibacter sphaeroides (strain ATCC 17025 / ATH 2.4.3) (Rhodobacter sphaeroides).